The following is a 305-amino-acid chain: Oxygen-dependent coproporphyrinogen-III oxidase (305 aa).

S92 contributes to the substrate binding site. 2 residues coordinate a divalent metal cation: H96 and H106. Residue H106 is the Proton donor of the active site. Residue 108–110 (NVR) participates in substrate binding. Residues H145 and H175 each coordinate a divalent metal cation. The tract at residues 239–274 (YVEFNLLFDRGTLFGLQSGGRAESILISLPPLVRWE) is important for dimerization. Residue 257 to 259 (GGR) participates in substrate binding.

This sequence belongs to the aerobic coproporphyrinogen-III oxidase family. In terms of assembly, homodimer. Requires a divalent metal cation as cofactor.

The protein resides in the cytoplasm. The enzyme catalyses coproporphyrinogen III + O2 + 2 H(+) = protoporphyrinogen IX + 2 CO2 + 2 H2O. It participates in porphyrin-containing compound metabolism; protoporphyrin-IX biosynthesis; protoporphyrinogen-IX from coproporphyrinogen-III (O2 route): step 1/1. In terms of biological role, involved in the heme biosynthesis. Catalyzes the aerobic oxidative decarboxylation of propionate groups of rings A and B of coproporphyrinogen-III to yield the vinyl groups in protoporphyrinogen-IX. The protein is Oxygen-dependent coproporphyrinogen-III oxidase of Xylella fastidiosa (strain 9a5c).